A 642-amino-acid chain; its full sequence is Threonine--tRNA ligase (642 aa).

Positions 1 to 61 constitute a TGS domain; the sequence is MPVITLPDGS…ENDAQLSIIT (61 aa). The catalytic stretch occupies residues 243-534; it reads DHRKIGKQLD…LTEEFAGFFP (292 aa). Lys286 is modified (N6-acetyllysine). Zn(2+) contacts are provided by Cys334, His385, and His511.

It belongs to the class-II aminoacyl-tRNA synthetase family. As to quaternary structure, homodimer. The cofactor is Zn(2+).

It localises to the cytoplasm. The catalysed reaction is tRNA(Thr) + L-threonine + ATP = L-threonyl-tRNA(Thr) + AMP + diphosphate + H(+). Its function is as follows. Catalyzes the attachment of threonine to tRNA(Thr) in a two-step reaction: L-threonine is first activated by ATP to form Thr-AMP and then transferred to the acceptor end of tRNA(Thr). Also edits incorrectly charged L-seryl-tRNA(Thr). This chain is Threonine--tRNA ligase, found in Escherichia coli O8 (strain IAI1).